The sequence spans 466 residues: Cysteine--tRNA ligase (466 aa).

Cys28 contacts Zn(2+). The 'HIGH' region motif lies at 30 to 40; that stretch reads PTVYNYIHIGN. Residues Cys208, His233, and Glu237 each contribute to the Zn(2+) site. The 'KMSKS' region signature appears at 265 to 269; that stretch reads KMSKS. Lys268 provides a ligand contact to ATP.

The protein belongs to the class-I aminoacyl-tRNA synthetase family. Monomer. Zn(2+) serves as cofactor.

It is found in the cytoplasm. It carries out the reaction tRNA(Cys) + L-cysteine + ATP = L-cysteinyl-tRNA(Cys) + AMP + diphosphate. This Staphylococcus aureus (strain Mu3 / ATCC 700698) protein is Cysteine--tRNA ligase.